Consider the following 160-residue polypeptide: MEVYAFIEVPKGSNVKYEYEDGKLKVDRILYGAMFYPYNYGFIPETLEEDGDPLDVLVITEEPLVPGSYIKVKPIGVLVTEDEKGVDRKIIAVPVKKVDPIYGEIEDISELKEGIKLKIKHFFERYKELEPGKFVKVKEFLGKEEAEKIIKQAQENYKKQ.

Positions 16, 28, and 40 each coordinate substrate. Residues D50, D55, and D87 each contribute to the Mg(2+) site. Y126 contacts substrate.

It belongs to the PPase family. As to quaternary structure, homohexamer. It depends on Mg(2+) as a cofactor.

Its subcellular location is the cytoplasm. The enzyme catalyses diphosphate + H2O = 2 phosphate + H(+). Catalyzes the hydrolysis of inorganic pyrophosphate (PPi) forming two phosphate ions. This chain is Inorganic pyrophosphatase, found in Nanoarchaeum equitans (strain Kin4-M).